The primary structure comprises 90 residues: Co-chaperonin GroES (90 aa).

Belongs to the GroES chaperonin family. In terms of assembly, heptamer of 7 subunits arranged in a ring. Interacts with the chaperonin GroEL.

The protein resides in the cytoplasm. In terms of biological role, together with the chaperonin GroEL, plays an essential role in assisting protein folding. The GroEL-GroES system forms a nano-cage that allows encapsulation of the non-native substrate proteins and provides a physical environment optimized to promote and accelerate protein folding. GroES binds to the apical surface of the GroEL ring, thereby capping the opening of the GroEL channel. This chain is Co-chaperonin GroES, found in Phocaeicola vulgatus (strain ATCC 8482 / DSM 1447 / JCM 5826 / CCUG 4940 / NBRC 14291 / NCTC 11154) (Bacteroides vulgatus).